The chain runs to 416 residues: Secreted RxLR effector protein 25 (416 aa).

The N-terminal stretch at 1-20 (MRSWLLLLVGLSSYFALSTS) is a signal peptide. The RxLR-dEER signature appears at 49 to 88 (RKLRAPGGDTNTLKDSGKARREKKVWKLFCRVFLQLDDEK).

The protein belongs to the RxLR effector family.

It localises to the secreted. Its subcellular location is the host cytoplasm. It is found in the host nucleus. Effector that partially suppresses the tobacco programmed cell death induced by cell death-inducing proteins. The sequence is that of Secreted RxLR effector protein 25 from Plasmopara viticola (Downy mildew of grapevine).